We begin with the raw amino-acid sequence, 403 residues long: Dual-specificity RNA methyltransferase RlmN (403 aa).

Catalysis depends on glutamate 126, which acts as the Proton acceptor. Positions glutamate 132–leucine 375 constitute a Radical SAM core domain. A disulfide bridge connects residues cysteine 139 and cysteine 378. 3 residues coordinate [4Fe-4S] cluster: cysteine 146, cysteine 150, and cysteine 153. S-adenosyl-L-methionine-binding positions include glycine 204–glutamate 205, serine 236, serine 258–histidine 260, and asparagine 335. The S-methylcysteine intermediate role is filled by cysteine 378.

The protein belongs to the radical SAM superfamily. RlmN family. Requires [4Fe-4S] cluster as cofactor.

The protein resides in the cytoplasm. It carries out the reaction adenosine(2503) in 23S rRNA + 2 reduced [2Fe-2S]-[ferredoxin] + 2 S-adenosyl-L-methionine = 2-methyladenosine(2503) in 23S rRNA + 5'-deoxyadenosine + L-methionine + 2 oxidized [2Fe-2S]-[ferredoxin] + S-adenosyl-L-homocysteine. The catalysed reaction is adenosine(37) in tRNA + 2 reduced [2Fe-2S]-[ferredoxin] + 2 S-adenosyl-L-methionine = 2-methyladenosine(37) in tRNA + 5'-deoxyadenosine + L-methionine + 2 oxidized [2Fe-2S]-[ferredoxin] + S-adenosyl-L-homocysteine. In terms of biological role, specifically methylates position 2 of adenine 2503 in 23S rRNA and position 2 of adenine 37 in tRNAs. m2A2503 modification seems to play a crucial role in the proofreading step occurring at the peptidyl transferase center and thus would serve to optimize ribosomal fidelity. This Bradyrhizobium sp. (strain ORS 278) protein is Dual-specificity RNA methyltransferase RlmN.